Here is a 179-residue protein sequence, read N- to C-terminus: Ribosome maturation factor RimM (179 aa).

In terms of domain architecture, PRC barrel spans 95–174; the sequence is KDEFFYFDIL…QIFCTQDAFL (80 aa).

Belongs to the RimM family. In terms of assembly, binds ribosomal protein uS19.

It is found in the cytoplasm. Functionally, an accessory protein needed during the final step in the assembly of 30S ribosomal subunit, possibly for assembly of the head region. Essential for efficient processing of 16S rRNA. May be needed both before and after RbfA during the maturation of 16S rRNA. It has affinity for free ribosomal 30S subunits but not for 70S ribosomes. In Campylobacter jejuni subsp. jejuni serotype O:6 (strain 81116 / NCTC 11828), this protein is Ribosome maturation factor RimM.